Reading from the N-terminus, the 196-residue chain is Superoxide dismutase [Fe] (196 aa).

Residues H20, H68, D157, and H161 each coordinate Fe cation.

This sequence belongs to the iron/manganese superoxide dismutase family. Homotetramer. It depends on Fe cation as a cofactor.

It catalyses the reaction 2 superoxide + 2 H(+) = H2O2 + O2. Its function is as follows. Destroys superoxide anion radicals which are normally produced within the cells and which are toxic to biological systems. The sequence is that of Superoxide dismutase [Fe] from Tetrahymena pyriformis.